We begin with the raw amino-acid sequence, 505 residues long: Forkhead box protein O4 (505 aa).

Disordered regions lie at residues Met1–Pro66, Ser175–Pro244, and Arg257–Pro276. At Thr32 the chain carries Phosphothreonine; by PKB/AKT1. Residues Arg97 to Lys215 are required for interaction with FOXK1. Positions Ala100–Gly188 form a DNA-binding region, fork-head. Residue Ser197 is modified to Phosphoserine; by PKB/AKT1. The segment covering Leu205–Pro216 has biased composition (basic residues). Residues Arg257–Leu271 show a composition bias toward polar residues. Ser262 carries the post-translational modification Phosphoserine; by PKB/AKT1.

As to quaternary structure, interacts with CREBBP/CBP, MYOCD, SIRT1, SRF and YWHAZ. Acetylated by CREBBP/CBP and deacetylated by SIRT1. Binding of YWHAZ inhibits DNA-binding. Interacts with USP7; the interaction is enhanced in presence of hydrogen peroxide and occurs independently of TP53. Interacts with NLK, and this inhibits monoubiquitination and transcriptional activity. Interacts with FOXK1; the interaction inhibits MEF2C transactivation activity. In terms of processing, acetylation by CREBBP/CBP is induced by oxidative stress and inhibits transcriptional activity. Deacetylation by SIRT1 is NAD-dependent and stimulates transcriptional activity. Post-translationally, phosphorylation by PKB/AKT1 inhibits transcriptional activity and is responsible for cytoplasmic localization. May be phosphorylated at multiple sites by NLK. Monoubiquitinated; monoubiquitination is induced by oxidative stress and reduced by deacetylase inhibitors; results in its relocalization to the nucleus and its increased transcriptional activity. Deubiquitinated by USP7; deubiquitination is induced by oxidative stress; enhances its interaction with USP7 and consequently, deubiquitination; increases its translocation to the cytoplasm and inhibits its transcriptional activity. Hydrogene-peroxide-induced ubiquitination and USP7-mediated deubiquitination have no major effect on its protein stability. As to expression, strongly expressed in brown adipose tissue and weakly in white adipose tissue (at protein level). Expressed in skeletal muscle.

It is found in the cytoplasm. The protein resides in the nucleus. In terms of biological role, transcription factor involved in the regulation of the insulin signaling pathway. Binds to insulin-response elements (IREs) and can activate transcription of IGFBP1. Down-regulates expression of HIF1A and suppresses hypoxia-induced transcriptional activation of HIF1A-modulated genes. Also involved in negative regulation of the cell cycle. Involved in increased proteasome activity in embryonic stem cells (ESCs) by activating expression of PSMD11 in ESCs, leading to enhanced assembly of the 26S proteasome, followed by higher proteasome activity. Represses smooth muscle cell differentiation by inhibiting the transcriptional coactivator activity of myocardin. The polypeptide is Forkhead box protein O4 (Foxo4) (Mus musculus (Mouse)).